The primary structure comprises 467 residues: Cysteine--tRNA ligase (467 aa).

C29 serves as a coordination point for Zn(2+). A 'HIGH' region motif is present at residues 31–41 (ATVQGEPHIGH). Positions 207, 232, and 236 each coordinate Zn(2+). A 'KMSKS' region motif is present at residues 263–267 (KMSKS). K266 is a binding site for ATP. Residues 446 to 467 (IDVTDTPNGPEWSLRTARGKAN) form a disordered region.

It belongs to the class-I aminoacyl-tRNA synthetase family. In terms of assembly, monomer. The cofactor is Zn(2+).

Its subcellular location is the cytoplasm. It catalyses the reaction tRNA(Cys) + L-cysteine + ATP = L-cysteinyl-tRNA(Cys) + AMP + diphosphate. In Nocardia farcinica (strain IFM 10152), this protein is Cysteine--tRNA ligase.